Here is a 257-residue protein sequence, read N- to C-terminus: Pyridoxal phosphate homeostasis protein (257 aa).

At lysine 47 the chain carries N6-(pyridoxal phosphate)lysine.

This sequence belongs to the pyridoxal phosphate-binding protein YggS/PROSC family.

Its function is as follows. Pyridoxal 5'-phosphate (PLP)-binding protein, which is involved in PLP homeostasis. This chain is Pyridoxal phosphate homeostasis protein, found in Mycobacterium leprae (strain TN).